Consider the following 146-residue polypeptide: Hemoglobin subunit beta (146 aa).

Valine 1 carries the N-acetylvaline modification. Residues 2-146 (HLTPEEKTAV…VANALAHKYH (145 aa)) form the Globin domain. Threonine 12 bears the Phosphothreonine mark. Serine 44 is subject to Phosphoserine. Residue lysine 59 is modified to N6-acetyllysine. Position 63 (histidine 63) interacts with heme b. At lysine 82 the chain carries N6-acetyllysine. Histidine 92 provides a ligand contact to heme b. At cysteine 93 the chain carries S-nitrosocysteine. N6-acetyllysine is present on lysine 144.

Belongs to the globin family. Heterotetramer of two alpha chains and two beta chains. As to expression, red blood cells.

Involved in oxygen transport from the lung to the various peripheral tissues. This is Hemoglobin subunit beta (HBB) from Chlorocebus aethiops (Green monkey).